Here is a 420-residue protein sequence, read N- to C-terminus: Na(+)/H(+) antiporter NhaA (420 aa).

Transmembrane regions (helical) follow at residues Val-4–Ile-24, Asp-70–Leu-90, Leu-104–Phe-124, Ala-132–Gly-152, Phe-165–Tyr-185, Pro-192–Leu-212, Leu-233–Met-250, Val-299–Gly-319, Trp-323–Leu-343, Leu-361–Val-381, and Gly-395–Val-415.

It belongs to the NhaA Na(+)/H(+) (TC 2.A.33) antiporter family.

It localises to the cell inner membrane. The enzyme catalyses Na(+)(in) + 2 H(+)(out) = Na(+)(out) + 2 H(+)(in). Its function is as follows. Na(+)/H(+) antiporter that extrudes sodium in exchange for external protons. This Jannaschia sp. (strain CCS1) protein is Na(+)/H(+) antiporter NhaA.